The chain runs to 418 residues: Glutamyl-tRNA reductase (418 aa).

Substrate contacts are provided by residues T49–R52, S107, E112–Q114, and Q118. C50 acts as the Nucleophile in catalysis. An NADP(+)-binding site is contributed by G187–I192.

The protein belongs to the glutamyl-tRNA reductase family. As to quaternary structure, homodimer.

The enzyme catalyses (S)-4-amino-5-oxopentanoate + tRNA(Glu) + NADP(+) = L-glutamyl-tRNA(Glu) + NADPH + H(+). Its pathway is porphyrin-containing compound metabolism; protoporphyrin-IX biosynthesis; 5-aminolevulinate from L-glutamyl-tRNA(Glu): step 1/2. Catalyzes the NADPH-dependent reduction of glutamyl-tRNA(Glu) to glutamate 1-semialdehyde (GSA). The chain is Glutamyl-tRNA reductase from Pseudoalteromonas translucida (strain TAC 125).